A 1086-amino-acid polypeptide reads, in one-letter code: Tudor domain-containing protein 7 (1086 aa).

HTH OST-type domains are found at residues 3–76 (EADL…YAVA) and 222–291 (KMDE…YPAR). Residues 295–306 (PLKSDQDPEKEL) show a composition bias toward basic and acidic residues. Positions 295-324 (PLKSDQDPEKELPPPPPAPKQEVPSQGSPA) are disordered. Residues 325 to 394 (VMPDVKEKVA…TQKAILYAKL (70 aa)) form the HTH OST-type 3 domain. 2 Tudor domains span residues 501-558 (TVHV…FCSL) and 691-748 (LPFC…FLQE). A disordered region spans residues 844–866 (AASSPGNRNGGTPAPGSPAESLR). S847 carries the post-translational modification Phosphoserine. An interaction with CDK17 region spans residues 849–1086 (GNRNGGTPAP…QYLLELSKVN (238 aa)). Residues 881-1086 (TSSFSLEELP…QYLLELSKVN (206 aa)) are interaction with CABLES1.

Belongs to the TDRD7 family. Found in a mRNP complex, at least composed of TDRD1, TDRD6, TDRD7 and DDX4. Found in a complex containing CABLES1, CDK16 and CDK17. Interacts with CABLES1, CDK17 and PIWIL1. In terms of tissue distribution, mainly expressed in testis. Expressed in spermatogonia, spermatocytes and round spermatids (at protein level). Also expressed in the developing lens.

The protein resides in the cytoplasm. Its function is as follows. Component of specific cytoplasmic RNA granules involved in post-transcriptional regulation of specific genes: probably acts by binding to specific mRNAs and regulating their translation. Required for lens transparency during lens development, by regulating translation of genes such as CRYBB3 and HSPB1 in the developing lens. Also required during spermatogenesis. The polypeptide is Tudor domain-containing protein 7 (Tdrd7) (Mus musculus (Mouse)).